Here is a 285-residue protein sequence, read N- to C-terminus: Transmembrane protein DDB_G0269096 (285 aa).

Disordered regions lie at residues 1–25 (MEDR…MSQS) and 59–87 (SFEN…NNKN). 2 stretches are compositionally biased toward low complexity: residues 12–25 (SDIS…MSQS) and 65–85 (NNNN…NNNN). A run of 5 helical transmembrane segments spans residues 124-144 (LEEI…LALI), 152-172 (AQMQ…FGVP), 182-202 (LIMG…ALVY), 205-225 (ANFE…MQFT), and 250-270 (FYFI…TALV).

Its subcellular location is the membrane. The protein is Transmembrane protein DDB_G0269096 of Dictyostelium discoideum (Social amoeba).